A 502-amino-acid polypeptide reads, in one-letter code: MSTDTILSFEEAMEKYDPVLGFEVHVELNTKTKMFSSAPNVFGDEPNTNVNEVDLGMPGVLPVVNKTAIESSIKIGLALNCKIAETCRFARKQYFYPDTPKNFQTSQYDEPIAYDGYLDIELEDGTVFRVEIERAHMEEDAGKLTHMGGATGRIQGADFSLVDYNRAGVPLVEIVTKPIEGAGSRAPELAKAYVAAVREIVKNLGVSDARMERGNVRCDANVSLRPHGRERFGIRSETKNVNSLRAVEHAVRYEIQRHAAVLDAGEPVIQETRHWHEDTRTTTSGRAKSDADDYRYFPEPDLVPMVASREWVEELRATLPEPPAERRKRLKADWGYSDLEFRDVVNAGVLDEIEETISAGASASVARKWWMGEIVGRAKAADVDPGHLGVQPATIVELAKMVEDGKINNKMASQVLDGVLAGEGTPEEIVEKRGLAVVSDDGPLLEAIDAALAAQPDVADKIRGGKVQAIGAIVGGVMKATRGQADAGRVRELILEKLGVTA.

This sequence belongs to the GatB/GatE family. GatB subfamily. In terms of assembly, heterotrimer of A, B and C subunits.

The catalysed reaction is L-glutamyl-tRNA(Gln) + L-glutamine + ATP + H2O = L-glutaminyl-tRNA(Gln) + L-glutamate + ADP + phosphate + H(+). The enzyme catalyses L-aspartyl-tRNA(Asn) + L-glutamine + ATP + H2O = L-asparaginyl-tRNA(Asn) + L-glutamate + ADP + phosphate + 2 H(+). In terms of biological role, allows the formation of correctly charged Asn-tRNA(Asn) or Gln-tRNA(Gln) through the transamidation of misacylated Asp-tRNA(Asn) or Glu-tRNA(Gln) in organisms which lack either or both of asparaginyl-tRNA or glutaminyl-tRNA synthetases. The reaction takes place in the presence of glutamine and ATP through an activated phospho-Asp-tRNA(Asn) or phospho-Glu-tRNA(Gln). This Pseudarthrobacter chlorophenolicus (strain ATCC 700700 / DSM 12829 / CIP 107037 / JCM 12360 / KCTC 9906 / NCIMB 13794 / A6) (Arthrobacter chlorophenolicus) protein is Aspartyl/glutamyl-tRNA(Asn/Gln) amidotransferase subunit B.